The chain runs to 137 residues: Small heat shock protein IbpA (137 aa).

One can recognise a sHSP domain in the interval 28–137 (SQSNGGYPPY…ANKPRRIEIN (110 aa)).

The protein belongs to the small heat shock protein (HSP20) family. Monomer. Forms homomultimers of about 100-150 subunits at optimal growth temperatures. Conformation changes to monomers at high temperatures or high ionic concentrations.

It localises to the cytoplasm. In terms of biological role, associates with aggregated proteins, together with IbpB, to stabilize and protect them from irreversible denaturation and extensive proteolysis during heat shock and oxidative stress. Aggregated proteins bound to the IbpAB complex are more efficiently refolded and reactivated by the ATP-dependent chaperone systems ClpB and DnaK/DnaJ/GrpE. Its activity is ATP-independent. The chain is Small heat shock protein IbpA from Salmonella choleraesuis (strain SC-B67).